Here is a 48-residue protein sequence, read N- to C-terminus: uncharacterized protein (48 aa).

The tract at residues 1 to 48 (MSRRMGGGMPKINLSGAIPNNNTSTPSTPTLRSSVSVSSSNSRGLFLA) is disordered. Positions 20-48 (NNNTSTPSTPTLRSSVSVSSSNSRGLFLA) are enriched in low complexity.

This is an uncharacterized protein from Dictyostelium discoideum (Social amoeba).